The following is a 178-amino-acid chain: Interleukin-10 (178 aa).

Positions 1–18 are cleaved as a signal peptide; the sequence is MHSSALLCFLVFLAGVGA. Residue Asn-29 is glycosylated (N-linked (GlcNAc...) asparagine). Cystine bridges form between Cys-30-Cys-126 and Cys-80-Cys-132. A glycan (N-linked (GlcNAc...) asparagine) is linked at Asn-134.

Belongs to the IL-10 family. As to quaternary structure, homodimer. Interacts with IL10RA and IL10RB.

The protein localises to the secreted. Major immune regulatory cytokine that acts on many cells of the immune system where it has profound anti-inflammatory functions, limiting excessive tissue disruption caused by inflammation. Mechanistically, IL10 binds to its heterotetrameric receptor comprising IL10RA and IL10RB leading to JAK1 and STAT2-mediated phosphorylation of STAT3. In turn, STAT3 translocates to the nucleus where it drives expression of anti-inflammatory mediators. Targets antigen-presenting cells (APCs) such as macrophages and monocytes and inhibits their release of pro-inflammatory cytokines including granulocyte-macrophage colony-stimulating factor /GM-CSF, granulocyte colony-stimulating factor/G-CSF, IL-1 alpha, IL-1 beta, IL-6, IL-8 and TNF-alpha. Also interferes with antigen presentation by reducing the expression of MHC-class II and co-stimulatory molecules, thereby inhibiting their ability to induce T cell activation. In addition, controls the inflammatory response of macrophages by reprogramming essential metabolic pathways including mTOR signaling. This chain is Interleukin-10 (IL10), found in Felis catus (Cat).